Here is a 264-residue protein sequence, read N- to C-terminus: Small ribosomal subunit protein eS1B (264 aa).

Positions 1–19 are enriched in basic residues; it reads MALGKNKRISKGGKRGKRG. The segment at 1–23 is disordered; the sequence is MALGKNKRISKGGKRGKRGKAQE.

This sequence belongs to the eukaryotic ribosomal protein eS1 family. In terms of assembly, component of the small ribosomal subunit. Mature ribosomes consist of a small (40S) and a large (60S) subunit. The 40S subunit contains about 33 different proteins and 1 molecule of RNA (18S). The 60S subunit contains about 49 different proteins and 3 molecules of RNA (25S, 5.8S and 5S).

It is found in the cytoplasm. This Leishmania infantum protein is Small ribosomal subunit protein eS1B.